Reading from the N-terminus, the 179-residue chain is Guanosine-3',5'-bis(diphosphate) 3'-pyrophosphohydrolase MESH1 (179 aa).

An N-acetylglycine modification is found at Gly2. Residue Lys25 is modified to N6-acetyllysine. The region spanning 32 to 127 (YINHPIGVAR…VKLADKLYNL (96 aa)) is the HD domain. Positions 35, 61, and 62 each coordinate Mn(2+). Catalysis depends on nucleophile residues Glu65 and Asp66. Residue Lys97 is modified to N6-acetyllysine. Residue Asp122 coordinates Mn(2+). At Lys123 the chain carries N6-acetyllysine.

It belongs to the MESH1 family. Requires Mn(2+) as cofactor.

It carries out the reaction guanosine 3',5'-bis(diphosphate) + H2O = GDP + diphosphate + H(+). In terms of biological role, ppGpp hydrolyzing enzyme involved in starvation response. This chain is Guanosine-3',5'-bis(diphosphate) 3'-pyrophosphohydrolase MESH1 (Hddc3), found in Mus musculus (Mouse).